We begin with the raw amino-acid sequence, 699 residues long: NAD(P)H-quinone oxidoreductase subunit 5, chloroplastic (699 aa).

15 consecutive transmembrane segments (helical) span residues 1–21 (WIIPFVPLPVPMLIGVGLLLF), 32–52 (WAFPSILLLSIVMIFSTNLSI), 81–101 (IDPLTSIMSMLITIVGITVLI), 117–137 (FAYMSFFSTSMLGLVTSSNLI), 139–159 (IYIFWELVGVCSYLLIGFWFT), 177–197 (GDFGLLLGILGFYWITGSFEF), 216–236 (LFVTLCAALLFAGAVAKSAQF), 250–270 (TPISALIHAATMVAEGIFLVA), 272–292 (LLPLFIVIPYIMNFISLIGII), 319–339 (LGYMMLALGMGSYRSALFHLI), 346–366 (ALLFLGSGSVIHSMETIVGYS), 388–408 (ISFLLGTLSLCGIPPLACFWS), 417–437 (WLYSPIFAIIAWATAGLTAFY), 539–559 (LFPLLILVLFTLFVGYLGISF), and 598–618 (IFSVSIAYFGILLASLLYKPI).

It belongs to the complex I subunit 5 family. NDH is composed of at least 16 different subunits, 5 of which are encoded in the nucleus.

The protein localises to the plastid. It is found in the chloroplast thylakoid membrane. The catalysed reaction is a plastoquinone + NADH + (n+1) H(+)(in) = a plastoquinol + NAD(+) + n H(+)(out). It catalyses the reaction a plastoquinone + NADPH + (n+1) H(+)(in) = a plastoquinol + NADP(+) + n H(+)(out). Its function is as follows. NDH shuttles electrons from NAD(P)H:plastoquinone, via FMN and iron-sulfur (Fe-S) centers, to quinones in the photosynthetic chain and possibly in a chloroplast respiratory chain. The immediate electron acceptor for the enzyme in this species is believed to be plastoquinone. Couples the redox reaction to proton translocation, and thus conserves the redox energy in a proton gradient. This Digitalis grandiflora (Yellow foxglove) protein is NAD(P)H-quinone oxidoreductase subunit 5, chloroplastic (ndhF).